A 143-amino-acid chain; its full sequence is uncharacterized protein (143 aa).

The region spanning 5-137 (DARLASDLSL…LRSAADLMLA (133 aa)) is the HTH marR-type domain. Residues 51 to 74 (PGALAIRERVRPPSMTRVIASLAD) constitute a DNA-binding region (H-T-H motif).

Homodimer.

This is an uncharacterized protein from Mycobacterium bovis (strain ATCC BAA-935 / AF2122/97).